The following is a 355-amino-acid chain: Holliday junction branch migration complex subunit RuvB (355 aa).

The tract at residues 1 to 43 (MEEMDDFTVRRGEREDITGAAGPPEERPLDPAAFEEDDEPTLR) is disordered. Residues 4-203 (MDDFTVRRGE…FGFSARLDYY (200 aa)) are large ATPase domain (RuvB-L). Over residues 7–17 (FTVRRGEREDI) the composition is skewed to basic and acidic residues. ATP is bound by residues L42, R43, G84, K87, T88, S89, 150-152 (EDF), R193, Y203, and R240. A Mg(2+)-binding site is contributed by T88. Residues 204 to 274 (EPHELEKIVV…TANAALEMQG (71 aa)) form a small ATPAse domain (RuvB-S) region. Positions 277–355 (HLGLDRTDRE…HLGFPVRDGG (79 aa)) are head domain (RuvB-H). DNA contacts are provided by R313, R332, and R337.

Belongs to the RuvB family. Homohexamer. Forms an RuvA(8)-RuvB(12)-Holliday junction (HJ) complex. HJ DNA is sandwiched between 2 RuvA tetramers; dsDNA enters through RuvA and exits via RuvB. An RuvB hexamer assembles on each DNA strand where it exits the tetramer. Each RuvB hexamer is contacted by two RuvA subunits (via domain III) on 2 adjacent RuvB subunits; this complex drives branch migration. In the full resolvosome a probable DNA-RuvA(4)-RuvB(12)-RuvC(2) complex forms which resolves the HJ.

It is found in the cytoplasm. It carries out the reaction ATP + H2O = ADP + phosphate + H(+). The RuvA-RuvB-RuvC complex processes Holliday junction (HJ) DNA during genetic recombination and DNA repair, while the RuvA-RuvB complex plays an important role in the rescue of blocked DNA replication forks via replication fork reversal (RFR). RuvA specifically binds to HJ cruciform DNA, conferring on it an open structure. The RuvB hexamer acts as an ATP-dependent pump, pulling dsDNA into and through the RuvAB complex. RuvB forms 2 homohexamers on either side of HJ DNA bound by 1 or 2 RuvA tetramers; 4 subunits per hexamer contact DNA at a time. Coordinated motions by a converter formed by DNA-disengaged RuvB subunits stimulates ATP hydrolysis and nucleotide exchange. Immobilization of the converter enables RuvB to convert the ATP-contained energy into a lever motion, pulling 2 nucleotides of DNA out of the RuvA tetramer per ATP hydrolyzed, thus driving DNA branch migration. The RuvB motors rotate together with the DNA substrate, which together with the progressing nucleotide cycle form the mechanistic basis for DNA recombination by continuous HJ branch migration. Branch migration allows RuvC to scan DNA until it finds its consensus sequence, where it cleaves and resolves cruciform DNA. The polypeptide is Holliday junction branch migration complex subunit RuvB (Rubrobacter xylanophilus (strain DSM 9941 / JCM 11954 / NBRC 16129 / PRD-1)).